The sequence spans 755 residues: SWI/SNF-related matrix-associated actin-dependent regulator of chromatin subfamily A-like protein 1 (755 aa).

Positions 7–27 (SEIAEKKRIALAKLQAKKSQL) form a coiled coil. Disordered regions lie at residues 26–91 (QLLA…NKSS) and 104–134 (SNRELSRGAAHPYQRPNGGNERNKPTLSLSS). The segment covering 32–63 (PATNGKSTTSATGATQHANNGKSNPNQPQAKS) has biased composition (polar residues). Ser-63 carries the post-translational modification Phosphoserine. The 79-residue stretch at 139 to 217 (PVAVLLGNSI…KPYVHMNGIP (79 aa)) folds into the HARP domain. The 157-residue stretch at 256 to 412 (CFAIAQKGRI…FTQLQMIDGK (157 aa)) folds into the Helicase ATP-binding domain. 269 to 276 (DEMGLGKT) serves as a coordination point for ATP. The DESH box motif lies at 361–364 (DESH). The region spanning 527–681 (YLKTLVKEQK…NLQKATHTAA (155 aa)) is the Helicase C-terminal domain.

Belongs to the SNF2/RAD54 helicase family. SMARCAL1 subfamily.

The protein resides in the nucleus. ATP-dependent annealing helicase that catalyzes the rewinding of the stably unwound DNA. The chain is SWI/SNF-related matrix-associated actin-dependent regulator of chromatin subfamily A-like protein 1 (Marcal1) from Drosophila melanogaster (Fruit fly).